A 200-amino-acid polypeptide reads, in one-letter code: Large ribosomal subunit protein uL29 (200 aa).

The interval 1–107 is large ribosomal subunit protein uL29; the sequence is MTIAKELKQK…KQETKKAEVK (107 aa). The segment at 92–200 is disordered; it reads STKPESKQET…KMIKTKEKKQ (109 aa). Residues 93-179 show a composition bias toward basic and acidic residues; the sequence is TKPESKQETK…QEVKKVEAKK (87 aa). Residues 108-200 are unknown; sequence PKVESKPESK…KMIKTKEKKQ (93 aa). Over residues 186-200 the composition is skewed to basic residues; that stretch reads KPVKAKMIKTKEKKQ.

This sequence belongs to the universal ribosomal protein uL29 family.

This Mycoplasma genitalium (strain ATCC 33530 / DSM 19775 / NCTC 10195 / G37) (Mycoplasmoides genitalium) protein is Large ribosomal subunit protein uL29.